A 599-amino-acid chain; its full sequence is Cytochrome P450 monooxygenase ALT8 (599 aa).

2 helical membrane-spanning segments follow: residues 4–21 and 36–56; these read LACV…VYLG and ILFG…PAYF. Asn-127 is a glycosylation site (N-linked (GlcNAc...) asparagine). The span at 495–504 shows a compositional bias: low complexity; that stretch reads DDSSAASPSF. Residues 495 to 522 are disordered; sequence DDSSAASPSFGGSGKRKSQYTDTHKEPS. Cys-539 provides a ligand contact to heme.

Belongs to the cytochrome P450 family. It depends on heme as a cofactor.

The protein resides in the membrane. It participates in secondary metabolite biosynthesis. Functionally, cytochrome P450 monooxygenase; part of the gene cluster that mediates the biosynthesis of the host-selective toxins (HSTs) AAL-toxins, sphinganine-analog mycotoxins responsible for Alternaria stem canker on tomato by the tomato pathotype. The biosynthesis starts with the polyketide synthase ALT1-catalyzed C-16 carbon chain assembly from one starter acetyl-CoA unit with malonyl-CoA extender units. ALT1 also selectively transfers methyl groups at the first and the third cycle of chain elongation for AAL toxin. The C-16 polyketide chain is released from the enzyme by a nucleophilic attack of a carbanion, which is derived from R-carbon of glycin by decarboxylation, on the carbonyl carbon of polyketide acyl chain. This step is probably catalyzed by a pyridoxal 5'-phosphate-dependent aminoacyl transferase ALT4. The respective functions of the other enzymes encoded by the cluster have still to be elucidated. The sphingosine N-acyltransferase-like protein ALT7 seems not to act as a resistance/self-tolerance factor against the toxin in the toxin biosynthetic gene cluster, contrary to what is expected. This Alternaria alternata (Alternaria rot fungus) protein is Cytochrome P450 monooxygenase ALT8.